The following is a 29-amino-acid chain: NADP phosphatase 1 (29 aa).

As to quaternary structure, homodimer.

It localises to the cytoplasm. This is NADP phosphatase 1 from Arthrobacter sp. (strain KM).